We begin with the raw amino-acid sequence, 491 residues long: Trypanothione reductase (491 aa).

Residue 35–52 participates in FAD binding; sequence DVQATHGPPALVALGGTC. Cys52 and Cys57 form a disulfide bridge. His461 acts as the Proton acceptor in catalysis.

Belongs to the class-I pyridine nucleotide-disulfide oxidoreductase family. As to quaternary structure, homodimer. FAD is required as a cofactor.

The protein resides in the cytoplasm. It catalyses the reaction trypanothione + NADP(+) = trypanothione disulfide + NADPH + H(+). Trypanothione is the parasite analog of glutathione; this enzyme is the equivalent of glutathione reductase. This Leishmania donovani protein is Trypanothione reductase (TPR).